A 165-amino-acid chain; its full sequence is Peptidyl-prolyl cis-trans isomerase-like 1 (165 aa).

Positions 3–157 constitute a PPIase cyclophilin-type domain; that stretch reads EREEVILDTS…IVQKILYALN (155 aa).

The protein belongs to the cyclophilin-type PPIase family. PPIL1 subfamily.

The catalysed reaction is [protein]-peptidylproline (omega=180) = [protein]-peptidylproline (omega=0). PPIases accelerate the folding of proteins. It catalyzes the cis-trans isomerization of proline imidic peptide bonds in oligopeptides. This is Peptidyl-prolyl cis-trans isomerase-like 1 (cyp3) from Rhizopus delemar (strain RA 99-880 / ATCC MYA-4621 / FGSC 9543 / NRRL 43880) (Mucormycosis agent).